We begin with the raw amino-acid sequence, 873 residues long: Leucine--tRNA ligase (873 aa).

A 'HIGH' region motif is present at residues 42–52 (PYPSGKLHMGH). The disordered stretch occupies residues 624-643 (PVEIGGTEKMSKSKNNGVDP). A 'KMSKS' region motif is present at residues 632–636 (KMSKS). Position 635 (lysine 635) interacts with ATP.

Belongs to the class-I aminoacyl-tRNA synthetase family.

Its subcellular location is the cytoplasm. The enzyme catalyses tRNA(Leu) + L-leucine + ATP = L-leucyl-tRNA(Leu) + AMP + diphosphate. The sequence is that of Leucine--tRNA ligase from Pseudomonas paraeruginosa (strain DSM 24068 / PA7) (Pseudomonas aeruginosa (strain PA7)).